The chain runs to 506 residues: Cobyric acid synthase (506 aa).

The 198-residue stretch at 251–448 folds into the GATase cobBQ-type domain; the sequence is DITIAIVQLP…LHGLFDSDAF (198 aa). Cysteine 332 (nucleophile) is an active-site residue. Histidine 440 is an active-site residue.

It belongs to the CobB/CobQ family. CobQ subfamily.

It functions in the pathway cofactor biosynthesis; adenosylcobalamin biosynthesis. In terms of biological role, catalyzes amidations at positions B, D, E, and G on adenosylcobyrinic A,C-diamide. NH(2) groups are provided by glutamine, and one molecule of ATP is hydrogenolyzed for each amidation. The protein is Cobyric acid synthase of Salmonella arizonae (strain ATCC BAA-731 / CDC346-86 / RSK2980).